The sequence spans 270 residues: Undecaprenyl-diphosphatase (270 aa).

7 helical membrane passes run 3–23 (TIVTAILLGIVEGLTEFLPVS), 42–62 (WAMFNVVIQLGAILAVVVQYW), 86–106 (LLAAFIPSAILGLALKKYIDV), 108–128 (LGSPSVVCWALIAGGIAILVI), 184–204 (AEFSFFLAIPTMLGATTLELL), 217–237 (VGWSEIGVGFAVSFVVALAVI), and 249–269 (FKPFAWYRIAAGAVALGWLAM).

The protein belongs to the UppP family.

It is found in the cell inner membrane. The catalysed reaction is di-trans,octa-cis-undecaprenyl diphosphate + H2O = di-trans,octa-cis-undecaprenyl phosphate + phosphate + H(+). In terms of biological role, catalyzes the dephosphorylation of undecaprenyl diphosphate (UPP). Confers resistance to bacitracin. The chain is Undecaprenyl-diphosphatase from Novosphingobium aromaticivorans (strain ATCC 700278 / DSM 12444 / CCUG 56034 / CIP 105152 / NBRC 16084 / F199).